The following is a 224-amino-acid chain: Ornithine decarboxylase antizyme (224 aa).

The protein belongs to the ODC antizyme family. Interacts with ODC and thereby sterically blocks ODC homodimerization.

In terms of biological role, ornithine decarboxylase (ODC) antizyme protein that negatively regulates ODC activity and intracellular polyamine biosynthesis in response to increased intracellular polyamine levels. Binds to ODC monomers, inhibiting the assembly of the functional ODC homodimer, and targets the monomers for ubiquitin-independent proteolytic destruction by the 26S proteasome. The chain is Ornithine decarboxylase antizyme (spa1) from Schizosaccharomyces octosporus (Fission yeast).